The following is a 609-amino-acid chain: 2',5'-phosphodiesterase 12 (609 aa).

The N-terminal 16 residues, 1–16 (MWRLPGVRAALRGVRT), are a transit peptide targeting the mitochondrion. Residues 203–231 (PRAAEPEGGGPSSSSPSSPSPGWTETGVD) form a disordered region. The segment covering 214-224 (SSSSPSSPSPG) has biased composition (low complexity). At S217 the chain carries Phosphoserine. Residues E351, D496, and N498 each contribute to the Mg(2+) site. The active-site Proton donor/acceptor is D496.

This sequence belongs to the CCR4/nocturin family. Mg(2+) serves as cofactor. Liver.

Its subcellular location is the mitochondrion matrix. The catalysed reaction is Exonucleolytic cleavage of poly(A) to 5'-AMP.. Enzyme that cleaves 2',5'-phosphodiester bond linking adenosines of the 5'-triphosphorylated oligoadenylates, triphosphorylated oligoadenylates referred as 2-5A modulates the 2-5A system. Degrades triphosphorylated 2-5A to produce AMP and ATP. Also cleaves 3',5'-phosphodiester bond of oligoadenylates. Plays a role as a negative regulator of the 2-5A system that is one of the major pathways for antiviral and antitumor functions induced by interferons (IFNs). Suppression of this enzyme increases cellular 2-5A levels and decreases viral replication in cultured small-airway epithelial cells. This Bos taurus (Bovine) protein is 2',5'-phosphodiesterase 12 (PDE12).